Reading from the N-terminus, the 213-residue chain is Ras-related protein RabK1 (213 aa).

14-21 contributes to the GTP binding site; it reads GDRMVGKL. The Effector region motif lies at 36 to 43; it reads GNSIPFDF. GTP contacts are provided by residues 61–65 and 119–122; these read NTHGS and TKSD.

It belongs to the small GTPase superfamily. Rab family.

The polypeptide is Ras-related protein RabK1 (rabK1) (Dictyostelium discoideum (Social amoeba)).